Here is an 80-residue protein sequence, read N- to C-terminus: Exodeoxyribonuclease 7 small subunit (80 aa).

Belongs to the XseB family. In terms of assembly, heterooligomer composed of large and small subunits.

The protein localises to the cytoplasm. It carries out the reaction Exonucleolytic cleavage in either 5'- to 3'- or 3'- to 5'-direction to yield nucleoside 5'-phosphates.. Functionally, bidirectionally degrades single-stranded DNA into large acid-insoluble oligonucleotides, which are then degraded further into small acid-soluble oligonucleotides. This is Exodeoxyribonuclease 7 small subunit from Halalkalibacterium halodurans (strain ATCC BAA-125 / DSM 18197 / FERM 7344 / JCM 9153 / C-125) (Bacillus halodurans).